The sequence spans 375 residues: Carboxypeptidase O (375 aa).

The N-terminal stretch at 1 to 20 is a signal peptide; that stretch reads MKPLLGTFYLLGMLVPGWLG. Residues 50-345 form the Peptidase M14 domain; it reads RYHPMGEIYQ…EAVLSVLDDV (296 aa). Residues His109 and Glu112 each coordinate Zn(2+). Asn175 is a glycosylation site (N-linked (GlcNAc...) asparagine). His237 lines the Zn(2+) pocket. N-linked (GlcNAc...) asparagine glycosylation occurs at Asn252. Glu311 serves as the catalytic Proton donor/acceptor. N-linked (GlcNAc...) asparagine glycosylation occurs at Asn315. Ser354 is lipidated: GPI-anchor amidated serine. Positions 355–375 are cleaved as a propeptide — removed in mature form; that stretch reads ARKAKSTALVLGLLMSFMSLL.

Belongs to the peptidase M14 family. It depends on Zn(2+) as a cofactor.

It localises to the apical cell membrane. In terms of biological role, carboxypeptidase which preferentially cleaves C-terminal acidic residues from peptides and proteins. Can also cleave C-terminal hydrophobic amino acids, with a preference for small residues over large residues. The polypeptide is Carboxypeptidase O (Bos taurus (Bovine)).